A 407-amino-acid polypeptide reads, in one-letter code: Phosphopentomutase (407 aa).

Mn(2+)-binding residues include D10, D306, H311, D347, H348, and H359.

This sequence belongs to the phosphopentomutase family. Requires Mn(2+) as cofactor.

The protein resides in the cytoplasm. The catalysed reaction is 2-deoxy-alpha-D-ribose 1-phosphate = 2-deoxy-D-ribose 5-phosphate. It catalyses the reaction alpha-D-ribose 1-phosphate = D-ribose 5-phosphate. Its pathway is carbohydrate degradation; 2-deoxy-D-ribose 1-phosphate degradation; D-glyceraldehyde 3-phosphate and acetaldehyde from 2-deoxy-alpha-D-ribose 1-phosphate: step 1/2. Its function is as follows. Isomerase that catalyzes the conversion of deoxy-ribose 1-phosphate (dRib-1-P) and ribose 1-phosphate (Rib-1-P) to deoxy-ribose 5-phosphate (dRib-5-P) and ribose 5-phosphate (Rib-5-P), respectively. This Shigella dysenteriae serotype 1 (strain Sd197) protein is Phosphopentomutase.